We begin with the raw amino-acid sequence, 277 residues long: MKTKTDFLKMKQEGEPIVMLTAYDYPAAKLAEQAGVDMILVGDSLGMVVLGLDSTVSVTVADMIHHTKAVKRGAKDTFVVTDMPFMSYHCSLESALKNAAAIVQESGADALKLEGGDGVFETITALTRGGIPVVSHLGLTPQSVGVLGGYKVQGKDEESAGKLIEDSRRCEEAGAMALVLECVPAALAERISKELTIPVIGIGAGAGTDGQVLVYHDVVGHGVSRTPKFVKQYAQIDQPLEQALRGYVEDVRSRVFPEDAHSFRIDQQVLEGLYGGK.

Mg(2+) contacts are provided by Asp43 and Asp82. 3-methyl-2-oxobutanoate-binding positions include 43-44 (DS), Asp82, and Lys112. Position 114 (Glu114) interacts with Mg(2+). The active-site Proton acceptor is Glu181.

The protein belongs to the PanB family. Homodecamer; pentamer of dimers. Requires Mg(2+) as cofactor.

Its subcellular location is the cytoplasm. It catalyses the reaction 3-methyl-2-oxobutanoate + (6R)-5,10-methylene-5,6,7,8-tetrahydrofolate + H2O = 2-dehydropantoate + (6S)-5,6,7,8-tetrahydrofolate. The protein operates within cofactor biosynthesis; (R)-pantothenate biosynthesis; (R)-pantoate from 3-methyl-2-oxobutanoate: step 1/2. In terms of biological role, catalyzes the reversible reaction in which hydroxymethyl group from 5,10-methylenetetrahydrofolate is transferred onto alpha-ketoisovalerate to form ketopantoate. The sequence is that of 3-methyl-2-oxobutanoate hydroxymethyltransferase from Bacillus licheniformis (strain ATCC 14580 / DSM 13 / JCM 2505 / CCUG 7422 / NBRC 12200 / NCIMB 9375 / NCTC 10341 / NRRL NRS-1264 / Gibson 46).